A 31-amino-acid polypeptide reads, in one-letter code: Photosystem II reaction center protein T (31 aa).

Residues 3–23 (AIVYTFLLVGTLGIIFFAIFF) form a helical membrane-spanning segment.

Belongs to the PsbT family. As to quaternary structure, PSII is composed of 1 copy each of membrane proteins PsbA, PsbB, PsbC, PsbD, PsbE, PsbF, PsbH, PsbI, PsbJ, PsbK, PsbL, PsbM, PsbT, PsbY, PsbZ, Psb30/Ycf12, at least 3 peripheral proteins of the oxygen-evolving complex and a large number of cofactors. It forms dimeric complexes.

The protein resides in the plastid. It localises to the chloroplast thylakoid membrane. In terms of biological role, found at the monomer-monomer interface of the photosystem II (PS II) dimer, plays a role in assembly and dimerization of PSII. PSII is a light-driven water plastoquinone oxidoreductase, using light energy to abstract electrons from H(2)O, generating a proton gradient subsequently used for ATP formation. The chain is Photosystem II reaction center protein T from Ostreococcus tauri.